Consider the following 156-residue polypeptide: Lipoprotein signal peptidase (156 aa).

The next 3 helical transmembrane spans lie at 5 to 25 (FKFI…DQWV), 64 to 84 (YLHL…KTLL), and 89 to 109 (IAFG…FIYG). Catalysis depends on residues D113 and D130. The helical transmembrane segment at 122-142 (NFAIFNVADVMINISVALILI) threads the bilayer.

It belongs to the peptidase A8 family.

It is found in the cell inner membrane. The catalysed reaction is Release of signal peptides from bacterial membrane prolipoproteins. Hydrolyzes -Xaa-Yaa-Zaa-|-(S,diacylglyceryl)Cys-, in which Xaa is hydrophobic (preferably Leu), and Yaa (Ala or Ser) and Zaa (Gly or Ala) have small, neutral side chains.. Its pathway is protein modification; lipoprotein biosynthesis (signal peptide cleavage). Functionally, this protein specifically catalyzes the removal of signal peptides from prolipoproteins. In Campylobacter jejuni subsp. doylei (strain ATCC BAA-1458 / RM4099 / 269.97), this protein is Lipoprotein signal peptidase.